The primary structure comprises 302 residues: ATP synthase gamma chain, sodium ion specific (302 aa).

The protein belongs to the ATPase gamma chain family. F-type ATPases have 2 components, CF(1) - the catalytic core - and CF(0) - the membrane proton channel. CF(1) has five subunits: alpha(3), beta(3), gamma(1), delta(1), epsilon(1). CF(0) has three main subunits: a, b and c.

The protein resides in the cell membrane. Its activity is regulated as follows. Inhibited by nitrate. Its function is as follows. Produces ATP from ADP in the presence of a proton gradient across the membrane. The gamma chain is believed to be important in regulating ATPase activity and the flow of protons through the CF(0) complex. The polypeptide is ATP synthase gamma chain, sodium ion specific (atpG) (Acetobacterium woodii (strain ATCC 29683 / DSM 1030 / JCM 2381 / KCTC 1655 / WB1)).